A 660-amino-acid polypeptide reads, in one-letter code: Pentatricopeptide repeat-containing protein At4g20090 (660 aa).

PPR repeat units lie at residues 76–110 (GDST…NRVI), 111–141 (IERS…MVDE), 147–181 (SVKS…NMNM), 186–220 (NGLS…KCLP), 221–255 (DGYT…GCSP), 256–290 (SPVI…GCVP), 291–325 (NEVT…KCIP), 326–360 (NDVT…GYHL), 361–395 (NQHI…GCKP), 396–430 (NIVV…GCLP), 431–465 (NAYT…GCSR), 466–500 (NKFC…GIKP), 501–535 (DTVA…EEPK), 539–573 (DVVT…GCDP), and 574–609 (DVIT…LLKR).

This sequence belongs to the PPR family. P subfamily.

In terms of biological role, may play a role in embryogenesis. This Arabidopsis thaliana (Mouse-ear cress) protein is Pentatricopeptide repeat-containing protein At4g20090 (EMB1025).